Here is a 282-residue protein sequence, read N- to C-terminus: Parvulin-like PPIase (282 aa).

A signal peptide spans 1-20; sequence MKKLSVIFLSVSMLSGIAFA. Positions 138 to 231 constitute a PpiC domain; that stretch reads KEQIKVAHIL…FGWHIIKVLE (94 aa).

The protein belongs to the PpiC/parvulin rotamase family.

The protein localises to the cell outer membrane. The catalysed reaction is [protein]-peptidylproline (omega=180) = [protein]-peptidylproline (omega=0). The sequence is that of Parvulin-like PPIase (plp) from Rickettsia felis (strain ATCC VR-1525 / URRWXCal2) (Rickettsia azadi).